A 149-amino-acid chain; its full sequence is Calmodulin-like protein 3 (149 aa).

EF-hand domains are found at residues 8-43, 44-79, 81-116, and 117-149; these read EQVT…LGQN, PTEA…KMKD, DNEE…LGEK, and LSDE…LVSK. Residues Asp-21, Asp-23, Asp-25, Cys-27, Glu-32, Asp-57, Asp-59, Asn-61, Thr-63, Glu-68, Asp-94, Asp-96, Asn-98, Glu-105, Asp-130, Asp-132, Asp-134, Gln-136, and Glu-141 each coordinate Ca(2+).

It belongs to the calmodulin family. As to quaternary structure, interacts with MYO10, the interaction is calcium-dependent and essential for MYO10 function in filopodial extension. Expressed in normal mammary, prostate, cervical, and epidermal tissues. It is greatly reduced or undetectable in transformed cells.

Its function is as follows. May function as a specific light chain of unconventional myosin-10 (MYO10), also enhances MYO10 translation, possibly by acting as a chaperone for the emerging MYO10 heavy chain protein. May compete with calmodulin by binding, with different affinities, to cellular substrates. This Homo sapiens (Human) protein is Calmodulin-like protein 3 (CALML3).